We begin with the raw amino-acid sequence, 314 residues long: Mitochondrial 2-oxoglutarate/malate carrier protein (314 aa).

Ala-2 carries the post-translational modification N-acetylalanine. Phosphoserine is present on Ser-6. Solcar repeat units follow at residues 23 to 108 (VKFL…LFER), 117 to 208 (PGFL…SKQF), and 217 to 306 (DNIL…MNKA). A helical transmembrane segment spans residues 24–42 (KFLFGGLAGMGATVFVQPL). Lys-57 bears the N6-succinyllysine mark. An N6-acetyllysine modification is found at Lys-73. The helical transmembrane segment at 83 to 101 (GLSAGLLRQATYTTTRLGI) threads the bilayer. Residue Tyr-102 is modified to Phosphotyrosine. 3 helical membrane-spanning segments follow: residues 119 to 140 (FLLK…GTPA), 183 to 202 (GCIP…LASY), and 222 to 240 (HFCA…SMPV). Lys-256 is modified (N6-acetyllysine). The chain crosses the membrane as a helical span at residues 281-300 (GFTPYYARLGPHTVLTFIFL).

The protein belongs to the mitochondrial carrier (TC 2.A.29) family. As to quaternary structure, interacts with SMIM26.

Its subcellular location is the mitochondrion inner membrane. It carries out the reaction (S)-malate(in) + 2-oxoglutarate(out) = (S)-malate(out) + 2-oxoglutarate(in). The catalysed reaction is malonate(in) + 2-oxoglutarate(out) = malonate(out) + 2-oxoglutarate(in). The enzyme catalyses succinate(in) + 2-oxoglutarate(out) = succinate(out) + 2-oxoglutarate(in). It catalyses the reaction maleate(in) + 2-oxoglutarate(out) = maleate(out) + 2-oxoglutarate(in). It carries out the reaction oxaloacetate(in) + 2-oxoglutarate(out) = oxaloacetate(out) + 2-oxoglutarate(in). In terms of biological role, catalyzes the transport of 2-oxoglutarate (alpha-oxoglutarate) across the inner mitochondrial membrane in an electroneutral exchange for malate. Can also exchange 2-oxoglutarate for other dicarboxylic acids such as malonate, succinate, maleate and oxaloacetate, although with lower affinity. Contributes to several metabolic processes, including the malate-aspartate shuttle, the oxoglutarate/isocitrate shuttle, in gluconeogenesis from lactate, and in nitrogen metabolism. Maintains mitochondrial fusion and fission events, and the organization and morphology of cristae. Involved in the regulation of apoptosis. Helps protect from cytotoxic-induced apoptosis by modulating glutathione levels in mitochondria. This Mus musculus (Mouse) protein is Mitochondrial 2-oxoglutarate/malate carrier protein (Slc25a11).